We begin with the raw amino-acid sequence, 888 residues long: Bifunctional uridylyltransferase/uridylyl-removing enzyme (888 aa).

A uridylyltransferase region spans residues 1 to 338 (MIITSPLLDY…LPNYERKIEE (338 aa)). A disordered region spans residues 182 to 204 (EQAKRHAQHNNTESNLEPDIKNA). A uridylyl-removing region spans residues 339-699 (INENFKLVDG…AHRQSAQDAV (361 aa)). The HD domain maps to 457–579 (VDAHTLLLIR…LGDMEHLDYL (123 aa)). ACT domains lie at 700–781 (QIFI…GLMQ) and 809–887 (MVEI…IVSQ).

Belongs to the GlnD family. It depends on Mg(2+) as a cofactor.

The catalysed reaction is [protein-PII]-L-tyrosine + UTP = [protein-PII]-uridylyl-L-tyrosine + diphosphate. It carries out the reaction [protein-PII]-uridylyl-L-tyrosine + H2O = [protein-PII]-L-tyrosine + UMP + H(+). Its activity is regulated as follows. Uridylyltransferase (UTase) activity is inhibited by glutamine, while glutamine activates uridylyl-removing (UR) activity. Modifies, by uridylylation and deuridylylation, the PII regulatory proteins (GlnB and homologs), in response to the nitrogen status of the cell that GlnD senses through the glutamine level. Under low glutamine levels, catalyzes the conversion of the PII proteins and UTP to PII-UMP and PPi, while under higher glutamine levels, GlnD hydrolyzes PII-UMP to PII and UMP (deuridylylation). Thus, controls uridylylation state and activity of the PII proteins, and plays an important role in the regulation of nitrogen assimilation and metabolism. This chain is Bifunctional uridylyltransferase/uridylyl-removing enzyme, found in Acinetobacter baylyi (strain ATCC 33305 / BD413 / ADP1).